A 1447-amino-acid chain; its full sequence is ATP-dependent helicase SGS1 (1447 aa).

Disordered stretches follow at residues 37–78, 243–264, 342–430, 552–572, and 601–639; these read IANK…TATK, KKDGMSKDQSKGRSQVSSQDDN, KEGA…EEKE, KENEDFEEDNNNNGIEYLSDS, and TERKLTGDNEHPPPSWSPKIKREKSSVSQKDEEDDFDDD. Positions 59 to 78 are enriched in polar residues; the sequence is GTTNFITSIPASGPTNTATK. The segment covering 243–253 has biased composition (basic and acidic residues); it reads KKDGMSKDQSK. Polar residues predominate over residues 254-264; it reads GRSQVSSQDDN. Positions 363–386 are enriched in basic and acidic residues; sequence ELTRRRNMRSREPVNYRIPDRDDP. Acidic residues-rich tracts occupy residues 403-415 and 552-561; these read EREEDELTMEAED and KENEDFEEDN. Residues 601 to 611 are compositionally biased toward basic and acidic residues; it reads TERKLTGDNEH. Residues 687–864 enclose the Helicase ATP-binding domain; that stretch reads VNATLQGKDV…IHNLELKEPV (178 aa). Residue 714–721 participates in ATP binding; sequence AVVKSGKT. The short motif at 808–811 is the DEAH box element; the sequence is DEAH. Residues 886-1035 enclose the Helicase C-terminal domain; it reads TIFEICDAVK…NKEKHLNKLQ (150 aa). The region spanning 1272 to 1351 is the HRDC domain; it reads LNNLRMTYER…ADLSKKRSSE (80 aa). Residues 1402 to 1411 show a composition bias toward polar residues; it reads QIRQSQLPKN. Positions 1402–1447 are disordered; it reads QIRQSQLPKNTTSSKSGTRSISKSSKKSANGRRGFRNYRGHYRGRK. The segment covering 1412–1424 has biased composition (low complexity); that stretch reads TTSSKSGTRSISK. Basic residues predominate over residues 1425–1447; sequence SSKKSANGRRGFRNYRGHYRGRK.

It belongs to the helicase family. RecQ subfamily. In terms of assembly, heterodimer with TOP3. Forms a complex with TOP3 and RMI1. Forms a ternary complex with a MLH1-MLH3 heterodimer (MutLbeta) during meiosis. Interacts with TOP2. Mg(2+) is required as a cofactor.

The protein localises to the nucleus. It localises to the nucleolus. The catalysed reaction is Couples ATP hydrolysis with the unwinding of duplex DNA by translocating in the 3'-5' direction.. The enzyme catalyses ATP + H2O = ADP + phosphate + H(+). Helicase activity on G-quadruplex DNA is inhibited by ATP-gamma-S. ATP-dependent 3'-5' DNA helicase able to unwind duplex DNA or DNA:RNA heteroduplex. Unwinds G-quadruplex DNA; unwinding occurs in the 3'-5' direction, requires a 3' single-stranded end of at least 7 nucleotides. Helicase activity is higher on G-quadruplex substrates than on duplex DNA substrates. Assayed with a catalytic fragment (residues 400-1268). Telomeres and rDNA are notably G-rich; formation of G-quadruplex DNA would block DNA replication and transcription. Acts as an integral component of the S-phase checkpoint response, which arrests cells due to DNA damage or blocked fork progression during DNA replication. Can create a deleterious topological substrate that TOP3 preferentially resolves. The TOP3-SGS1 protein complex may function as a eukaryotic reverse gyrase introducing positive supercoils into extrachromosomal ribosomal DNA rings. Together with topoisomerase II has a role in chromosomal segregation. Maintains rDNA structure where it has a role in re-starting stalled replication forks. The protein is ATP-dependent helicase SGS1 of Saccharomyces cerevisiae (strain ATCC 204508 / S288c) (Baker's yeast).